The primary structure comprises 452 residues: Phosphoglucosamine mutase (452 aa).

Residue Ser104 is the Phosphoserine intermediate of the active site. Ser104, Asp245, Asp247, and Asp249 together coordinate Mg(2+). At Ser104 the chain carries Phosphoserine.

The protein belongs to the phosphohexose mutase family. The cofactor is Mg(2+). Activated by phosphorylation.

The enzyme catalyses alpha-D-glucosamine 1-phosphate = D-glucosamine 6-phosphate. Its function is as follows. Catalyzes the conversion of glucosamine-6-phosphate to glucosamine-1-phosphate. The protein is Phosphoglucosamine mutase of Gluconacetobacter diazotrophicus (strain ATCC 49037 / DSM 5601 / CCUG 37298 / CIP 103539 / LMG 7603 / PAl5).